We begin with the raw amino-acid sequence, 268 residues long: ClpXP adapter protein SpxH (268 aa).

It belongs to the SpxH family. In terms of assembly, interacts with Spx.

It localises to the cytoplasm. Its function is as follows. Adapter protein required for efficient degradation of Spx by ClpXP under non-stress conditions. Interaction with Spx stabilizes Spx and exposes the C-terminus of Spx for recognition and proteolysis by ClpXP. The chain is ClpXP adapter protein SpxH from Staphylococcus aureus (strain Mu3 / ATCC 700698).